A 53-amino-acid chain; its full sequence is uncharacterized protein (53 aa).

The disordered stretch occupies residues 34–53; it reads RKEKGKRHAAPLSLMGVHKR.

This is an uncharacterized protein from Treponema pallidum (strain Nichols).